Reading from the N-terminus, the 952-residue chain is Chaperone protein ClpC2, chloroplastic (952 aa).

A chloroplast-targeting transit peptide spans 1–45 (MAWSIALLTPPFFGPGRHVQAKEYREPRGCVMKMSSLKAPVLRIQ). Residues 115-257 (FERFTEKAIK…RTQVIRMVGE (143 aa)) form the Clp R domain. 2 repeat regions span residues 118–183 (FTEK…IGRG) and 193–257 (FTPR…MVGE). The segment at 278–525 (LEEYGTNLTK…RVRLRHAQLP (248 aa)) is i. 323 to 330 (GEPGVGKT) lines the ATP pocket. The UVR domain maps to 532–567 (EKQLRQITKEKNEAVRSQDFEMAGSHRDREIELKAE). Residues 592–783 (VTESDIQHIV…LLIMTSNVGS (192 aa)) form an II region. 666–673 (GPTGVGKS) contributes to the ATP binding site.

Belongs to the ClpA/ClpB family. ClpC subfamily. Homodimer and homohexamer. Hexamerization upon addition of ATP. Interacts with CLPT1. Interacts with CLPS1. Stably associated with the import machinery. Interacts with CLPF. Requires Mg(2+) as cofactor. Expressed at low levels in roots and inflorescences. Expressed at very low levels in rosette leaves. Expressed in photosynthetic green tissues with high levels in young, developing leaf tissues.

The protein localises to the plastid. It localises to the chloroplast stroma. The protein resides in the chloroplast membrane. The enzyme catalyses ATP + H2O = ADP + phosphate + H(+). In terms of biological role, molecular chaperone. May act as a suppressor of FtsH-mediated thylakoid membrane biogenesis and may enhance photoinhibition. Seems not involved in chloroplastic protein import. Probable component of the TIC-associated stromal import motor involved in inner membrane translocation. Has an ATPase activity, but no ADPase activity. Interacts with transit peptides with a positional preference. Localization of the signal sequence at the N-terminal end of a protein seems mandatory for interaction to take place. In Arabidopsis thaliana (Mouse-ear cress), this protein is Chaperone protein ClpC2, chloroplastic.